Reading from the N-terminus, the 787-residue chain is Glutamine-dependent NAD(+) synthetase (787 aa).

In terms of domain architecture, CN hydrolase spans 5–275 (VTVAVSTLNQ…VEVTLATIDL (271 aa)). Glu-45 acts as the Proton acceptor; for glutaminase activity in catalysis. Lys-114 acts as the For glutaminase activity in catalysis. Catalysis depends on Cys-175, which acts as the Nucleophile; for glutaminase activity. The segment at 325–787 (MHTPEEEIAL…KIKDRTGIPV (463 aa)) is ligase. 355–362 (PLSGGVDS) provides a ligand contact to ATP. Ser-357 is a catalytic residue. Ser-703 carries the post-translational modification Phosphoserine.

This sequence in the C-terminal section; belongs to the NAD synthetase family.

The enzyme catalyses deamido-NAD(+) + L-glutamine + ATP + H2O = L-glutamate + AMP + diphosphate + NAD(+) + H(+). The protein operates within cofactor biosynthesis; NAD(+) biosynthesis; NAD(+) from deamido-NAD(+) (L-Gln route): step 1/1. Its function is as follows. Catalyzes the ATP-dependent amidation of deamido-NAD to form NAD. Uses L-glutamine as a nitrogen source. Because of its role in energy metabolism, involved in the modulation of aged-related cardiac function, mobility, and lifespan. In Drosophila melanogaster (Fruit fly), this protein is Glutamine-dependent NAD(+) synthetase.